The sequence spans 309 residues: Ribose-phosphate pyrophosphokinase (309 aa).

ATP contacts are provided by residues 37–39 (DGE) and 96–97 (RQ). Mg(2+) is bound by residues His130 and Asp169. Lys192 is an active-site residue. D-ribose 5-phosphate contacts are provided by residues Arg194, Asp218, and 222–226 (DTAGT).

Belongs to the ribose-phosphate pyrophosphokinase family. Class I subfamily. In terms of assembly, homohexamer. Mg(2+) serves as cofactor.

It localises to the cytoplasm. It carries out the reaction D-ribose 5-phosphate + ATP = 5-phospho-alpha-D-ribose 1-diphosphate + AMP + H(+). The protein operates within metabolic intermediate biosynthesis; 5-phospho-alpha-D-ribose 1-diphosphate biosynthesis; 5-phospho-alpha-D-ribose 1-diphosphate from D-ribose 5-phosphate (route I): step 1/1. Its function is as follows. Involved in the biosynthesis of the central metabolite phospho-alpha-D-ribosyl-1-pyrophosphate (PRPP) via the transfer of pyrophosphoryl group from ATP to 1-hydroxyl of ribose-5-phosphate (Rib-5-P). In Helicobacter hepaticus (strain ATCC 51449 / 3B1), this protein is Ribose-phosphate pyrophosphokinase.